A 123-amino-acid polypeptide reads, in one-letter code: Sterol carrier protein 2 (123 aa).

Residues 16-113 (KEHLSTDAGK…GSLSAAQKFT (98 aa)) enclose the SCP2 domain. Residues 121–123 (SKL) carry the Microbody targeting signal motif.

As to expression, expressed in most tissues including seedlings, cotyledons, inflorescence, leaves, stems, roots, siliques and flower buds, with the highest levels in floral tissues and in maturing seeds.

Its subcellular location is the peroxisome. In terms of biological role, enhances the transfer of lipids between membranes in vitro. Active on phosphatidylcholine (PC), 1-palmitoyl 2-oleoyl phosphatidylcholine (POPC) and ergosterol, and, to a lower extent, dimyristoyl phosphatidic acid, stigmasterol, desmosterol, beta-sitosterol and steryl glucoside. Inactive or poorly active on palmitic acid, stearoyl-coenzyme A, cholesterol, glucosylceramide and ceramide. Required during seeds and seedlings development. This Arabidopsis thaliana (Mouse-ear cress) protein is Sterol carrier protein 2.